A 391-amino-acid chain; its full sequence is 3-ketoacyl-CoA thiolase (391 aa).

Cysteine 95 acts as the Acyl-thioester intermediate in catalysis. Residues histidine 347 and cysteine 377 each act as proton acceptor in the active site.

Belongs to the thiolase-like superfamily. Thiolase family. Heterotetramer of two alpha chains (FadB) and two beta chains (FadA).

The protein resides in the cytoplasm. It carries out the reaction an acyl-CoA + acetyl-CoA = a 3-oxoacyl-CoA + CoA. It functions in the pathway lipid metabolism; fatty acid beta-oxidation. In terms of biological role, catalyzes the final step of fatty acid oxidation in which acetyl-CoA is released and the CoA ester of a fatty acid two carbons shorter is formed. The chain is 3-ketoacyl-CoA thiolase from Ectopseudomonas oleovorans (Pseudomonas oleovorans).